The following is a 296-amino-acid chain: Nucleotide-binding protein spr1424 (296 aa).

An ATP-binding site is contributed by 13–20; the sequence is GMGGAGKT. 63–66 serves as a coordination point for GTP; sequence DMRS.

This sequence belongs to the RapZ-like family.

Displays ATPase and GTPase activities. This is Nucleotide-binding protein spr1424 from Streptococcus pneumoniae (strain ATCC BAA-255 / R6).